A 393-amino-acid polypeptide reads, in one-letter code: NAD(P)H-quinone oxidoreductase subunit H, chloroplastic (393 aa).

It belongs to the complex I 49 kDa subunit family. NDH is composed of at least 16 different subunits, 5 of which are encoded in the nucleus.

The protein resides in the plastid. It is found in the chloroplast thylakoid membrane. It carries out the reaction a plastoquinone + NADH + (n+1) H(+)(in) = a plastoquinol + NAD(+) + n H(+)(out). The catalysed reaction is a plastoquinone + NADPH + (n+1) H(+)(in) = a plastoquinol + NADP(+) + n H(+)(out). NDH shuttles electrons from NAD(P)H:plastoquinone, via FMN and iron-sulfur (Fe-S) centers, to quinones in the photosynthetic chain and possibly in a chloroplast respiratory chain. The immediate electron acceptor for the enzyme in this species is believed to be plastoquinone. Couples the redox reaction to proton translocation, and thus conserves the redox energy in a proton gradient. The polypeptide is NAD(P)H-quinone oxidoreductase subunit H, chloroplastic (Saccharum hybrid (Sugarcane)).